Consider the following 267-residue polypeptide: MDFRAGLENVLQQEVTVIHGEETRKLCIANNKYLNGKDADTFRNLAVLLDHLGERSAKAQKLPKPVTSFIKFRNSDQSIFLLSDIPVKKFVILIYMFFRVLGFLKVGRKRLFVHDSKGVCVECIPLCILDFYIHESHQRKGYGKKLFDFMLKTENIQPSYLAIDLPSMKMIQFLHKHYHLINPIYSPNNFVVYSEFFNNLNNSNYSIVQSKLTTTNCFLKSNSSRIHQNKHNHSIVSNNNNNNNNNIIIIIIIQNITHHNNQLTIEQ.

An N-acetyltransferase domain is found at 1 to 197 (MDFRAGLENV…NNFVVYSEFF (197 aa)). Residues 131-144 (FYIH…GYGK) and 167-176 (SMKMIQFLHK) each bind acetyl-CoA.

The protein belongs to the acetyltransferase ATAT1 family.

The enzyme catalyses L-lysyl-[alpha-tubulin] + acetyl-CoA = N(6)-acetyl-L-lysyl-[alpha-tubulin] + CoA + H(+). Its function is as follows. Specifically acetylates 'Lys-40' in alpha-tubulin on the lumenal side of microtubules. Promotes microtubule destabilization and accelerates microtubule dynamics; this activity may be independent of acetylation activity. Acetylates alpha-tubulin with a slow enzymatic rate, due to a catalytic site that is not optimized for acetyl transfer. Enters the microtubule through each end and diffuses quickly throughout the lumen of microtubules. Acetylates only long/old microtubules because of its slow acetylation rate since it does not have time to act on dynamically unstable microtubules before the enzyme is released. The chain is Alpha-tubulin N-acetyltransferase from Schistosoma japonicum (Blood fluke).